Consider the following 360-residue polypeptide: D-alanine--D-alanine ligase (360 aa).

The 207-residue stretch at 146–352 folds into the ATP-grasp domain; that stretch reads KLCAVQAGIH…FTELIDRLVR (207 aa). 179-234 is a binding site for ATP; the sequence is KKRFAPPFFVKPANLGSSVGIAKIHSFDELENALDEACRLDVKILVEKAIEGREVE. Mg(2+) is bound by residues aspartate 305, glutamate 319, and asparagine 321.

The protein belongs to the D-alanine--D-alanine ligase family. Mg(2+) is required as a cofactor. It depends on Mn(2+) as a cofactor.

The protein resides in the cytoplasm. It carries out the reaction 2 D-alanine + ATP = D-alanyl-D-alanine + ADP + phosphate + H(+). It participates in cell wall biogenesis; peptidoglycan biosynthesis. In terms of biological role, cell wall formation. The protein is D-alanine--D-alanine ligase of Chlorobium phaeobacteroides (strain BS1).